The primary structure comprises 449 residues: Cytochrome P450 monooxygenase iliC (449 aa).

Residues 28–44 form a helical membrane-spanning segment; that stretch reads TFAITFMGVKQICTIEG. A heme-binding site is contributed by cysteine 397.

This sequence belongs to the cytochrome P450 family. It depends on heme as a cofactor.

Its subcellular location is the membrane. It catalyses the reaction (3E,5S)-3-[(2E,4E,8S,10E,12Z)-1-hydroxy-4,8-dimethyltetradeca-2,4,10,12-tetraen-1-ylidene]-5-[(4-hydroxyphenyl)methyl]pyrrolidine-2,4-dione + reduced [NADPH--hemoprotein reductase] + O2 = 3-[(2E,4E,8S,10E,12Z)-4,8-dimethyltetradeca-2,4,10,12-tetraenoyl]-4-hydroxy-5-(4-hydroxyphenyl)-1,2-dihydropyridin-2-one + oxidized [NADPH--hemoprotein reductase] + 2 H2O. The protein operates within mycotoxin biosynthesis. Cytochrome P450 monooxygenase; part of the gene cluster that mediates the biosynthesis of ilicicolin H, a 4-hydroxy-2-pyridonealkaloid that has potent and broad antifungal activities by inhibiting the mitochondrial respiration chain. IliC catalyzes the ring expansion of the tetramate intermediate to the acyclic 2-pyridone intermediate that contains the trans bis-diene chain. The biosynthesis of ilicicolin H starts with formation of the tetramic acid by the hybrid PKS-NRPS synthetase iliA with the partnering trans-enoyl reductase iliB since iliA lacks a designated enoylreductase (ER) domain. The cytochrome P450 monooxygenase iliC then catalyzes the ring expansion of the tetramate to the acyclic 2-pyridone. The pericyclase iliD further converts the acyclic 2-pyridone into 8-epi-ilicicolin H. 8-epi-ilicicolin H might then spontaneously convert to ilicicolin H since ilicicolin H is produced in the absence of the epimerase iliE, in contrast to what was observed for the Talaromyces variabilis ilicolin H biosynthetic pathway. This chain is Cytochrome P450 monooxygenase iliC, found in Hypocrea jecorina (strain QM6a) (Trichoderma reesei).